The primary structure comprises 101 residues: Small ribosomal subunit protein uS14 (101 aa).

This sequence belongs to the universal ribosomal protein uS14 family. In terms of assembly, part of the 30S ribosomal subunit. Contacts proteins S3 and S10.

In terms of biological role, binds 16S rRNA, required for the assembly of 30S particles and may also be responsible for determining the conformation of the 16S rRNA at the A site. In Kocuria rhizophila (strain ATCC 9341 / DSM 348 / NBRC 103217 / DC2201), this protein is Small ribosomal subunit protein uS14.